Reading from the N-terminus, the 79-residue chain is uncharacterized protein (79 aa).

Positions 4–43 form a coiled coil; that stretch reads QENEDLRKQLVEASELLKSQAKELKDAHQQQKLALQDFLE.

This is an uncharacterized protein from Homo sapiens (Human).